The following is a 245-amino-acid chain: Probable phosphatase YcdX (245 aa).

The Zn(2+) site is built by His7, His9, His15, His40, Glu73, His101, His131, Asp192, and His194.

The protein belongs to the PHP family. In terms of assembly, homotrimer. The cofactor is Zn(2+).

The sequence is that of Probable phosphatase YcdX from Escherichia coli (strain K12 / MC4100 / BW2952).